A 529-amino-acid polypeptide reads, in one-letter code: Bifunctional purine biosynthesis protein PurH (529 aa).

An MGS-like domain is found at M1–V148.

This sequence belongs to the PurH family.

The enzyme catalyses (6R)-10-formyltetrahydrofolate + 5-amino-1-(5-phospho-beta-D-ribosyl)imidazole-4-carboxamide = 5-formamido-1-(5-phospho-D-ribosyl)imidazole-4-carboxamide + (6S)-5,6,7,8-tetrahydrofolate. The catalysed reaction is IMP + H2O = 5-formamido-1-(5-phospho-D-ribosyl)imidazole-4-carboxamide. It functions in the pathway purine metabolism; IMP biosynthesis via de novo pathway; 5-formamido-1-(5-phospho-D-ribosyl)imidazole-4-carboxamide from 5-amino-1-(5-phospho-D-ribosyl)imidazole-4-carboxamide (10-formyl THF route): step 1/1. Its pathway is purine metabolism; IMP biosynthesis via de novo pathway; IMP from 5-formamido-1-(5-phospho-D-ribosyl)imidazole-4-carboxamide: step 1/1. This chain is Bifunctional purine biosynthesis protein PurH, found in Shewanella amazonensis (strain ATCC BAA-1098 / SB2B).